We begin with the raw amino-acid sequence, 146 residues long: Hemoglobin subunit beta (146 aa).

The Globin domain maps to 2-146 (FLTAEEKGLV…VANALAHKYH (145 aa)). The residue at position 44 (Ser44) is a Phosphoserine. Residue Lys59 is modified to N6-acetyllysine. Residue His63 participates in heme b binding. Lys82 is modified (N6-acetyllysine). Heme b is bound at residue His92. S-nitrosocysteine is present on Cys93. At Lys144 the chain carries N6-acetyllysine.

The protein belongs to the globin family. Heterotetramer of two alpha chains and two beta chains. As to expression, red blood cells.

Involved in oxygen transport from the lung to the various peripheral tissues. The polypeptide is Hemoglobin subunit beta (HBB) (Lynx lynx (Eurasian lynx)).